The chain runs to 612 residues: MSTSFQEFKAFCNKVGLDFQWLNLQSSKSVPESGSSEGFSAVSDTVQENIRPATEPLNVNQSKDPVSNFFYDVKNAPLWNVYKRNHSGHSSTEACSGVSSGQASKNIPEAMVKETVLSNHDNVTIINELLPTSSAMHQEESTAMTTSYLLSHSVNDSCNVMLSSSSHNRAMLPPSLVQRNNATTSPTTDSASENNESVPSLTSSVSTSSSVYSSWNPPHSPHISSFPDGNFASLNAEVTCFDFRRTKDSRTKETNESIIPTEIYCPINSTDHHKHYPSQKSKQDACAPAPRNQNISCSVGSAAEFSQSNHTLTTVVPSYMQQYLDRPQNWFESKMGKYCPLFLRSTKNIDYDSLEFKFERKMIAVQYLLLDEQSEPRRYYNPSNKSIPFWKRPFNFDTMPSYDQLMEEAECRFYSYQYKYEGFQRIEPYSIFCPWKNTQREIDLVLDHIHFSLDVGEKKSLNRKGNITLDTLDSKVDPNIQIKPYQIFPSNNLVYEGLPHPAEQSLILSPGTSLIERAFQALIDICKESIPPSNDCTTRNHNSAPQLTVPEPSKPCRLLLVRESRTATELETNKKLWLHSQRRNIEVTVPMHPSEHGTKSRLRKWLSTFVHQ.

The disordered stretch occupies residues 171–217; sequence MLPPSLVQRNNATTSPTTDSASENNESVPSLTSSVSTSSSVYSSWNP. Over residues 177–196 the composition is skewed to polar residues; that stretch reads VQRNNATTSPTTDSASENNE. The segment covering 197 to 214 has biased composition (low complexity); that stretch reads SVPSLTSSVSTSSSVYSS.

The protein to yeast YNL018c.

This is an uncharacterized protein from Saccharomyces cerevisiae (strain ATCC 204508 / S288c) (Baker's yeast).